A 419-amino-acid chain; its full sequence is Tubby-like protein 4 (419 aa).

The interval 1–96 (MAATKREPLR…EREEEEEGSS (96 aa)) is disordered. Basic and acidic residues predominate over residues 33 to 57 (AKEKEKENEVPTEIGRGKDGGEKKP).

It belongs to the TUB family.

This chain is Tubby-like protein 4 (TULP4), found in Oryza sativa subsp. japonica (Rice).